The chain runs to 155 residues: Rhombotin-1 (155 aa).

LIM zinc-binding domains follow at residues 21 to 83 and 85 to 147; these read KGCA…LFGT and GNCA…GQLN.

It localises to the nucleus. Its function is as follows. May be involved in gene regulation within neural lineage cells potentially by direct DNA binding or by binding to other transcription factors. The chain is Rhombotin-1 from Danio rerio (Zebrafish).